A 433-amino-acid polypeptide reads, in one-letter code: MRYMQDSSMPCQDASPPDVGAAPRRATRAVRVQWGGRTVTVGGNASVVVQSMTNTDTADAVATAIQVKELAQAGSEIVRITVNTPEAAREVAAIREQLDRMGVEVPLVGDFHYNGHKLLTQFPECAQALSKYRINPGNMGGGKRRDDNFAQMIEVACRHDKPVRIGVNWGSLDHELMARKMDENSRRAQPWEAQAVMRDALVVSAISNARRAEELGLRSDAIVLSCKVSHVQDLIAVYRDLSARCDYPLHLGLTEAGMGSKGIVASTAALAVLLQEGIGDTIRISLTPEPGGDRTREVIVAQEILQTMGLRAFTPMVVACPGCGRTSSTFFQELADSIQSFLRRQMPLWRTRYPGVESMNVAVMGCVVNGPGESRHADIGISLPGTGEVPAAPVFIDGERTVTLKGDHIAEEFQAIVEDYVARRYGAGITHQE.

Polar residues predominate over residues 1–10 (MRYMQDSSMP). The segment at 1-24 (MRYMQDSSMPCQDASPPDVGAAPR) is disordered. [4Fe-4S] cluster-binding residues include Cys320, Cys323, Cys366, and Glu373.

The protein belongs to the IspG family. [4Fe-4S] cluster is required as a cofactor.

It catalyses the reaction (2E)-4-hydroxy-3-methylbut-2-enyl diphosphate + oxidized [flavodoxin] + H2O + 2 H(+) = 2-C-methyl-D-erythritol 2,4-cyclic diphosphate + reduced [flavodoxin]. The protein operates within isoprenoid biosynthesis; isopentenyl diphosphate biosynthesis via DXP pathway; isopentenyl diphosphate from 1-deoxy-D-xylulose 5-phosphate: step 5/6. Functionally, converts 2C-methyl-D-erythritol 2,4-cyclodiphosphate (ME-2,4cPP) into 1-hydroxy-2-methyl-2-(E)-butenyl 4-diphosphate. In Bordetella bronchiseptica (strain ATCC BAA-588 / NCTC 13252 / RB50) (Alcaligenes bronchisepticus), this protein is 4-hydroxy-3-methylbut-2-en-1-yl diphosphate synthase (flavodoxin).